The primary structure comprises 216 residues: Urease accessory protein UreG (216 aa).

25–32 is a GTP binding site; sequence GPVGSGKT.

It belongs to the SIMIBI class G3E GTPase family. UreG subfamily. Homodimer. UreD, UreF and UreG form a complex that acts as a GTP-hydrolysis-dependent molecular chaperone, activating the urease apoprotein by helping to assemble the nickel containing metallocenter of UreC. The UreE protein probably delivers the nickel.

The protein resides in the cytoplasm. Facilitates the functional incorporation of the urease nickel metallocenter. This process requires GTP hydrolysis, probably effectuated by UreG. The protein is Urease accessory protein UreG of Burkholderia thailandensis (strain ATCC 700388 / DSM 13276 / CCUG 48851 / CIP 106301 / E264).